The following is a 389-amino-acid chain: Mannitol-1-phosphate 5-dehydrogenase (389 aa).

NAD(+) is bound at residue 5 to 16 (AIQFGGGNIGRG). The active site involves Lys-214.

Belongs to the mannitol dehydrogenase family. In terms of assembly, monomer.

It catalyses the reaction D-mannitol 1-phosphate + NAD(+) = beta-D-fructose 6-phosphate + NADH + H(+). Functionally, catalyzes the NAD(H)-dependent interconversion of D-fructose 6-phosphate and D-mannitol 1-phosphate in the mannitol metabolic pathway. This chain is Mannitol-1-phosphate 5-dehydrogenase, found in Talaromyces marneffei (strain ATCC 18224 / CBS 334.59 / QM 7333) (Penicillium marneffei).